Consider the following 828-residue polypeptide: Isethionate sulfite-lyase (828 aa).

Residues 30–698 (ERVFTILESF…VVSATPNGRK (669 aa)) enclose the PFL domain. Residues Arg-187, Gln-191, 466-468 (CTE), and Arg-676 contribute to the 2-hydroxyethane-1-sulfonate site. The active-site Cysteine radical intermediate is the Cys-466. The active-site Proton acceptor is Glu-468. In terms of domain architecture, Glycine radical spans 705–828 (DGSSASHGAD…LIARTGHDVM (124 aa)). Gly-803 bears the Glycine radical mark.

Belongs to the glycyl radical enzyme (GRE) family. Homodimer. In terms of processing, requires the activating protein IseH to generate the key active site glycyl radical on Gly-803 that is involved in catalysis.

The enzyme catalyses 2-hydroxyethane-1-sulfonate = acetaldehyde + sulfite + H(+). It functions in the pathway organosulfur degradation; alkanesulfonate degradation. Functionally, involved in an anaerobic respiration pathway that converts the sulfonate isethionate (2-hydroxyethanesulfonate) to ammonia, acetate and sulfide. Catalyzes the radical-mediated C-S bond cleavage of isethionate (2-hydroxyethanesulfonate) to form sulfite and acetaldehyde. Shows no activity with taurine or ethanolamine as substrates. The sequence is that of Isethionate sulfite-lyase from Nitratidesulfovibrio vulgaris (strain ATCC 29579 / DSM 644 / CCUG 34227 / NCIMB 8303 / VKM B-1760 / Hildenborough) (Desulfovibrio vulgaris).